Here is a 359-residue protein sequence, read N- to C-terminus: DNA replication and repair protein RecF (359 aa).

Position 30 to 37 (30 to 37 (GPNGSGKT)) interacts with ATP.

It belongs to the RecF family.

The protein resides in the cytoplasm. Its function is as follows. The RecF protein is involved in DNA metabolism; it is required for DNA replication and normal SOS inducibility. RecF binds preferentially to single-stranded, linear DNA. It also seems to bind ATP. This Aliivibrio fischeri (strain MJ11) (Vibrio fischeri) protein is DNA replication and repair protein RecF.